A 509-amino-acid polypeptide reads, in one-letter code: tRNA-2-methylthio-N(6)-dimethylallyladenosine synthase (509 aa).

Polar residues predominate over residues 1–13 (MNEQQRLASQQAN). The segment at 1–26 (MNEQQRLASQQANSSKKKEEKDYSKY) is disordered. A compositionally biased stretch (basic and acidic residues) spans 16 to 25 (KKKEEKDYSK). Residues 66–184 (RKFYIRTYGC…LPYILKDAMF (119 aa)) enclose the MTTase N-terminal domain. [4Fe-4S] cluster is bound by residues cysteine 75, cysteine 111, cysteine 145, cysteine 221, cysteine 225, and cysteine 228. The Radical SAM core domain occupies 207-437 (RRGDIKAWVN…NALVNKLAIE (231 aa)). The TRAM domain maps to 440 to 503 (NRYKGQIVEV…TWSLNGELVE (64 aa)).

It belongs to the methylthiotransferase family. MiaB subfamily. In terms of assembly, monomer. The cofactor is [4Fe-4S] cluster.

It is found in the cytoplasm. The enzyme catalyses N(6)-dimethylallyladenosine(37) in tRNA + (sulfur carrier)-SH + AH2 + 2 S-adenosyl-L-methionine = 2-methylsulfanyl-N(6)-dimethylallyladenosine(37) in tRNA + (sulfur carrier)-H + 5'-deoxyadenosine + L-methionine + A + S-adenosyl-L-homocysteine + 2 H(+). In terms of biological role, catalyzes the methylthiolation of N6-(dimethylallyl)adenosine (i(6)A), leading to the formation of 2-methylthio-N6-(dimethylallyl)adenosine (ms(2)i(6)A) at position 37 in tRNAs that read codons beginning with uridine. The polypeptide is tRNA-2-methylthio-N(6)-dimethylallyladenosine synthase (Bacillus cereus (strain ATCC 10987 / NRS 248)).